A 187-amino-acid chain; its full sequence is Adenylate kinase 1 (187 aa).

ATP is bound at residue 14–19 (GSGKGT). The NMP stretch occupies residues 34–63 (STGDMLRQAIADGTELGNQAKGYMDKGELV). Residues Thr35, Arg40, 61–63 (ELV), 89–92 (GFPR), and Gln96 contribute to the AMP site. The interval 130–136 (ARGRADD) is LID. Arg131 is a binding site for ATP. Residues Arg133 and Arg144 each contribute to the AMP site. Gln172 is an ATP binding site.

Belongs to the adenylate kinase family. Monomer.

The protein resides in the cytoplasm. The enzyme catalyses AMP + ATP = 2 ADP. Its pathway is purine metabolism; AMP biosynthesis via salvage pathway; AMP from ADP: step 1/1. Functionally, catalyzes the reversible transfer of the terminal phosphate group between ATP and AMP. Plays an important role in cellular energy homeostasis and in adenine nucleotide metabolism. The protein is Adenylate kinase 1 of Synechocystis sp. (strain ATCC 27184 / PCC 6803 / Kazusa).